Consider the following 385-residue polypeptide: D-alanyl-D-alanine-carboxypeptidase/endopeptidase AmpH (385 aa).

An N-terminal signal peptide occupies residues 1–21; that stretch reads MKRSLLFSAVLCAASLTSVHA.

This sequence belongs to the beta-lactamase family.

Its subcellular location is the cell inner membrane. Its activity is regulated as follows. Inhibited by cefmetazole. Hydrolyzes the cross-linked dimers tetrapentapeptide (D45) and tetratetrapeptide (D44). Removes the terminal D-alanine from muropeptides and disaccharide pentapeptide M5 with a C-terminal D-Ala-D-Ala dipeptide. Associated with recycling and remodeling of peptidoglycan (PG). This Escherichia coli O157:H7 protein is D-alanyl-D-alanine-carboxypeptidase/endopeptidase AmpH (ampH).